Here is a 143-residue protein sequence, read N- to C-terminus: Glycine cleavage system H protein 1 (143 aa).

A Lipoyl-binding domain is found at 26–107; it reads IYSVGMASIL…PYSSWIAKLK (82 aa). N6-lipoyllysine is present on K67.

The protein belongs to the GcvH family. The glycine cleavage system is composed of four proteins: P, T, L and H. (R)-lipoate is required as a cofactor.

Functionally, the glycine cleavage system catalyzes the degradation of glycine. The H protein shuttles the methylamine group of glycine from the P protein to the T protein. In Aquifex aeolicus (strain VF5), this protein is Glycine cleavage system H protein 1.